The primary structure comprises 70 residues: DNA-directed RNA polymerase subunit omega (70 aa).

The protein belongs to the RNA polymerase subunit omega family. In terms of assembly, the RNAP catalytic core consists of 2 alpha, 1 beta, 1 beta' and 1 omega subunit. When a sigma factor is associated with the core the holoenzyme is formed, which can initiate transcription.

It carries out the reaction RNA(n) + a ribonucleoside 5'-triphosphate = RNA(n+1) + diphosphate. Promotes RNA polymerase assembly. Latches the N- and C-terminal regions of the beta' subunit thereby facilitating its interaction with the beta and alpha subunits. The chain is DNA-directed RNA polymerase subunit omega from Bacillus mycoides (strain KBAB4) (Bacillus weihenstephanensis).